A 322-amino-acid chain; its full sequence is tRNA-dihydrouridine(16) synthase (322 aa).

Residues 8-10 (PME) and Gln69 each bind FMN. The active-site Proton donor is Cys99. Residues Lys140, 200–202 (NGD), and 224–225 (GR) each bind FMN.

It belongs to the Dus family. DusC subfamily. FMN is required as a cofactor.

The catalysed reaction is 5,6-dihydrouridine(16) in tRNA + NADP(+) = uridine(16) in tRNA + NADPH + H(+). It catalyses the reaction 5,6-dihydrouridine(16) in tRNA + NAD(+) = uridine(16) in tRNA + NADH + H(+). Functionally, catalyzes the synthesis of 5,6-dihydrouridine (D), a modified base found in the D-loop of most tRNAs, via the reduction of the C5-C6 double bond in target uridines. Specifically modifies U16 in tRNAs. This is tRNA-dihydrouridine(16) synthase from Cupriavidus necator (strain ATCC 17699 / DSM 428 / KCTC 22496 / NCIMB 10442 / H16 / Stanier 337) (Ralstonia eutropha).